The following is a 1007-amino-acid chain: Kinesin-like protein KIN-7D, chloroplastic (1007 aa).

The N-terminal 53 residues, 1 to 53, are a transit peptide targeting the chloroplast; that stretch reads MATRPASRQRRASSAAAAVAVVRSSPQPQQQQQQQLPIPQSGSPTSTTTTTTS. Low complexity predominate over residues 1–55; sequence MATRPASRQRRASSAAAAVAVVRSSPQPQQQQQQQLPIPQSGSPTSTTTTTTSSS. The tract at residues 1–79 is disordered; that stretch reads MATRPASRQR…LFAGLDEDPA (79 aa). Residues 83-402 form the Kinesin motor domain; the sequence is NVTVTVRFRP…LKFAHRAKRI (320 aa). An ATP-binding site is contributed by 163–170; the sequence is GVTSSGKT. Residues 403–495 adopt a coiled-coil conformation; sequence EVQASQNKII…QRLTKLILVS (93 aa). The interval 579–607 is disordered; the sequence is ILTSSEGDKSSLTKSTAPSTPIGESVNFP. Coiled coils occupy residues 687 to 716, 754 to 791, and 836 to 907; these read NNEKIQMEMKKVNDEIKGKKHQIASLERQI, AADNRVIQDQLNEKTTECMELQEEVAHLKEQLYQTLQA, and SVEI…SVRS. Positions 901–941 are disordered; the sequence is ELASVRSPTPRRANSGLRGTRRDSISRRHEPAPRRDNNAGY. A compositionally biased stretch (basic and acidic residues) spans 920 to 941; sequence TRRDSISRRHEPAPRRDNNAGY. The stretch at 942 to 982 forms a coiled coil; that stretch reads EREKALEAVLMEKEQKEAELQRRIEESKQKEAFLESELANM.

It belongs to the TRAFAC class myosin-kinesin ATPase superfamily. Kinesin family. KIN-7 subfamily. In terms of assembly, binds microtubules. Homodimer. The cofactor is Mg(2+).

Its subcellular location is the plastid. The protein resides in the chloroplast. Its function is as follows. Probable minus end-directed motor protein with a microtubule-enhanced ATPase activity. Binds ATP/ADP in vitro. Retains total enzymatic activity even after the removal of the ADP bound in the active site. The polypeptide is Kinesin-like protein KIN-7D, chloroplastic (Oryza sativa subsp. japonica (Rice)).